The sequence spans 181 residues: Adenylate kinase (181 aa).

Gly10–Thr15 serves as a coordination point for ATP. The tract at residues Ser30–Val59 is NMP. Residues Thr31, Arg36, Asp57–Val59, Gly85–Arg88, and Gln92 each bind AMP. Residues Gly126–Asp132 are LID. Position 127 (Arg127) interacts with ATP. The AMP site is built by Arg129 and Arg140. Gly166 contributes to the ATP binding site.

It belongs to the adenylate kinase family. Monomer.

The protein resides in the cytoplasm. It catalyses the reaction AMP + ATP = 2 ADP. The protein operates within purine metabolism; AMP biosynthesis via salvage pathway; AMP from ADP: step 1/1. Its function is as follows. Catalyzes the reversible transfer of the terminal phosphate group between ATP and AMP. Plays an important role in cellular energy homeostasis and in adenine nucleotide metabolism. The polypeptide is Adenylate kinase (Mycobacterium marinum (strain ATCC BAA-535 / M)).